The primary structure comprises 420 residues: Histidine--tRNA ligase (420 aa).

The protein belongs to the class-II aminoacyl-tRNA synthetase family. In terms of assembly, homodimer.

It localises to the cytoplasm. It carries out the reaction tRNA(His) + L-histidine + ATP = L-histidyl-tRNA(His) + AMP + diphosphate + H(+). This is Histidine--tRNA ligase from Saccharopolyspora erythraea (strain ATCC 11635 / DSM 40517 / JCM 4748 / NBRC 13426 / NCIMB 8594 / NRRL 2338).